The chain runs to 334 residues: tRNA N6-adenosine threonylcarbamoyltransferase (334 aa).

His-112 and His-116 together coordinate Fe cation. Residues 135–139 (VVSGG), Asp-168, Gly-181, Asp-185, and Asn-274 each bind substrate. Asp-303 contacts Fe cation.

Belongs to the KAE1 / TsaD family. It depends on Fe(2+) as a cofactor.

The protein localises to the cytoplasm. It carries out the reaction L-threonylcarbamoyladenylate + adenosine(37) in tRNA = N(6)-L-threonylcarbamoyladenosine(37) in tRNA + AMP + H(+). In terms of biological role, required for the formation of a threonylcarbamoyl group on adenosine at position 37 (t(6)A37) in tRNAs that read codons beginning with adenine. Is involved in the transfer of the threonylcarbamoyl moiety of threonylcarbamoyl-AMP (TC-AMP) to the N6 group of A37, together with TsaE and TsaB. TsaD likely plays a direct catalytic role in this reaction. This chain is tRNA N6-adenosine threonylcarbamoyltransferase, found in Anaeromyxobacter dehalogenans (strain 2CP-C).